We begin with the raw amino-acid sequence, 452 residues long: 1,4-beta-D-glucan cellobiohydrolase A (452 aa).

The first 17 residues, Met1 to Ala17, serve as a signal peptide directing secretion. A glycan (N-linked (GlcNAc...) asparagine) is linked at Asn62. The active-site Nucleophile is Glu227. Residue Glu232 is the Proton donor of the active site. Residues Asn285, Asn335, Asn402, and Asn445 are each glycosylated (N-linked (GlcNAc...) asparagine).

The protein belongs to the glycosyl hydrolase 7 (cellulase C) family.

Its subcellular location is the secreted. It carries out the reaction Hydrolysis of (1-&gt;4)-beta-D-glucosidic linkages in cellulose and cellotetraose, releasing cellobiose from the non-reducing ends of the chains.. The biological conversion of cellulose to glucose generally requires three types of hydrolytic enzymes: (1) Endoglucanases which cut internal beta-1,4-glucosidic bonds; (2) Exocellobiohydrolases that cut the disaccharide cellobiose from the non-reducing end of the cellulose polymer chain; (3) Beta-1,4-glucosidases which hydrolyze the cellobiose and other short cello-oligosaccharides to glucose. In Aspergillus niger, this protein is 1,4-beta-D-glucan cellobiohydrolase A (cbhA).